A 331-amino-acid chain; its full sequence is Smad-related protein daf-14 (331 aa).

Residues 134–331 enclose the MH2 domain; the sequence is WCTIFYYELT…NERPEIGSRS (198 aa). The segment at 168–187 is disordered; the sequence is ECRMSLTSQPSSRNSKSSQI. A compositionally biased stretch (low complexity) spans 175-185; the sequence is SQPSSRNSKSS.

In terms of assembly, interacts with R-SMAD daf-8 and co-SMAD daf-3. Interacts with daf-3 in a daf-8 dependent manner.

Functionally, probably an atypical receptor-regulated SMAD (R-SMAD) that is an intracellular signal transducer and transcriptional modulator activated by TGF-beta-like daf-7 signaling. Plays a role in TGF-beta-like daf-7 signaling in regulating entry into a developmentally arrested larval state known as dauer, in response to harsh environmental conditions; partially redundant with R-SMAD daf-8. The polypeptide is Smad-related protein daf-14 (Caenorhabditis elegans).